A 300-amino-acid chain; its full sequence is Haloalkane dehalogenase (300 aa).

The region spanning 32-155 (AIVFQHGNPT…PAVRGVFQGF (124 aa)) is the AB hydrolase-1 domain. The active-site Nucleophile is D109. E133 functions as the Proton donor in the catalytic mechanism. The active-site Proton acceptor is H273.

Belongs to the haloalkane dehalogenase family. Type 2 subfamily. In terms of assembly, monomer.

The catalysed reaction is 1-haloalkane + H2O = a halide anion + a primary alcohol + H(+). Its function is as follows. Catalyzes hydrolytic cleavage of carbon-halogen bonds in halogenated aliphatic compounds, leading to the formation of the corresponding primary alcohols, halide ions and protons. This is Haloalkane dehalogenase from Mycobacterium bovis (strain BCG / Pasteur 1173P2).